The following is a 621-amino-acid chain: Stimulated by retinoic acid gene 6 protein-like (621 aa).

Residues 1 to 21 (MLAASTRTRQINITCDNPVDR) lie on the Extracellular side of the membrane. A glycan (N-linked (GlcNAc...) asparagine) is linked at asparagine 12. A helical transmembrane segment spans residues 22 to 42 (EVFLHYSLIPSLCIILVLSFL). Over 43-53 (QRREHRRQRDD) the chain is Cytoplasmic. The helical transmembrane segment at 54-74 (TSYLLGNHFGIIVPLDFVGTF) threads the bilayer. Residues 75 to 110 (SNRWSYGAAFGATANKVMFLFSEGYQPLTVPQWAQA) are Extracellular-facing. Residues 111–131 (FVLFIGGMEVGLSYFPFFACL) form a helical membrane-spanning segment. Over 132–137 (SSEFQL) the chain is Cytoplasmic. The chain crosses the membrane as a helical span at residues 138-158 (VSSILGFSYSLTWFVVTVLQI). The Extracellular segment spans residues 159 to 173 (SQCPHGQFLGRFETL). A helical transmembrane segment spans residues 174-194 (VFYWPSLLCLGFLLGRFLHMF). Over 195–258 (LKALPVHLGL…CFQFPSRMVG (64 aa)) the chain is Cytoplasmic. Residues 259 to 279 (TLLLAFICLYLFIVIEFCVFL) traverse the membrane as a helical segment. Topologically, residues 280–321 (HVRDKLDMFEDKLESYLTHMNETGTLTPIILQVKELISVTKG) are extracellular. A helical membrane pass occupies residues 322 to 342 (VWVVTILPAALTCVTYLFHIL). Topologically, residues 343–383 (ACYRKHMKRLWAGDKHFLPQKFHSPSSAASVVAIARYSGWQ) are cytoplasmic. A helical membrane pass occupies residues 384–404 (IAYILWGYLIIHVVQSLCGVM). The Extracellular segment spans residues 405–424 (LMYGLVLPIIHHRGLEMLQG). The helical transmembrane segment at 425-445 (FGLGVLTLSIVVGLIILQVWI) threads the bilayer. At 446-476 (AGTFFLQPKLGTSDKQKPLALNNRRAFHNFN) the chain is on the cytoplasmic side. Residues 477–497 (YFLFFYNVLLGLGACLSRLLI) traverse the membrane as a helical segment. The Extracellular segment spans residues 498–621 (SCLLGTWLIA…TQILLTCSDC (124 aa)). Threonine 612 is subject to Phosphothreonine.

Glycosylated. In terms of tissue distribution, highly expressed in liver and small intestine. Also expressed in spleen, kidney, colon, stomach, placenta, adipose tissue and isolated adipocytes.

The protein resides in the cell membrane. Acts as a high-affinity cell-surface receptor for retinol-binding protein RBP4 and mediates RBP4-dependent retinol uptake in the liver. The sequence is that of Stimulated by retinoic acid gene 6 protein-like from Mus musculus (Mouse).